Reading from the N-terminus, the 572-residue chain is Na(+)/citrate cotransporter (572 aa).

Helical transmembrane passes span 13 to 33 (SFVILFFAPILLLPLIILVPD), 53 to 73 (VIPVAITSLLPVLLFPLLKVL), 80 to 100 (VQYMTDTNMLFLGSLIVATAV), 124 to 144 (LMLGFMFVTAFLSMWISNTAT), 218 to 238 (AASIGGTATLTGTGPNVVLLG), 255 to 275 (SWFAFALPNMLLMLVMAWLWL), 315 to 335 (PLSYAECNVLFCFGLLIILWF), and 357 to 377 (HVTDATVAIFVAILLFIVPSQ). The N-linked (GlcNAc...) asparagine glycan is linked to N382. The next 4 helical transmembrane spans lie at 410 to 430 (VPWGIVLLLGGGFAMAKGCET), 443 to 463 (PLSSVRPAIITLILSCIVAMT), 491 to 511 (PLYVMIPCTLSASLAFMLPVA), and 532 to 552 (TGLVMNILGIASVFLSVNTWG). The N-linked (GlcNAc...) asparagine glycan is linked to N566.

The protein belongs to the SLC13A/DASS transporter (TC 2.A.47) family. NADC subfamily. Homodimer. As to expression, expressed in liver, testis and brain.

Its subcellular location is the cell membrane. The enzyme catalyses citrate(out) + 4 Na(+)(out) = citrate(in) + 4 Na(+)(in). With respect to regulation, inhibited by Li(+). Functionally, high-affinity sodium/citrate cotransporter that mediates citrate entry into cells, which is a critical participant of biochemical pathways. May function in various metabolic processes in which citrate has a critical role such as energy production (Krebs cycle), fatty acid synthesis, cholesterol synthesis, glycolysis, and gluconeogenesis. Transports citrate into the cell in a Na(+)-dependent manner, recognizing the trivalent form of citrate (physiological pH) rather than the divalent form. Can recognize succinate as a substrate, but its affinity for succinate is several fold lower than for citrate. The stoichiometry is probably 4 Na(+) for each carboxylate, irrespective of whether the translocated substrate is divalent or trivalent, rendering the process electrogenic. Involved in the regulation of citrate levels in the brain. This Rattus norvegicus (Rat) protein is Na(+)/citrate cotransporter (Slc13a5).